The primary structure comprises 248 residues: Probable uridine-cytidine kinase (248 aa).

ATP is bound at residue 15 to 23; it reads GGTSCGKST. Substrate is bound by residues D73, Y101, R154, R164, and Q172. D201 is an ATP binding site. The interval 224-248 is disordered; the sequence is SDEEEEKENELVKQGSFRRPFSRPH.

This sequence belongs to the uridine kinase family.

It carries out the reaction uridine + ATP = UMP + ADP + H(+). The catalysed reaction is cytidine + ATP = CMP + ADP + H(+). It participates in pyrimidine metabolism; CTP biosynthesis via salvage pathway; CTP from cytidine: step 1/3. Its pathway is pyrimidine metabolism; UMP biosynthesis via salvage pathway; UMP from uridine: step 1/1. This chain is Probable uridine-cytidine kinase, found in Caenorhabditis elegans.